A 551-amino-acid polypeptide reads, in one-letter code: Monocarboxylic acid transporter (551 aa).

A run of 13 helical transmembrane segments spans residues 18-38 (NPIL…TVVL), 63-83 (GLAI…VGAI), 90-110 (GFLY…LVAE), 144-164 (VTLF…SVLL), 171-191 (WQAV…LLGG), 203-223 (AVLL…KVSG), 267-287 (LDFI…PHVL), 307-327 (IVLI…AAAL), 355-375 (IFMA…VAGL), 411-431 (VVIG…NVAF), 432-452 (LVAL…LYSL), 463-483 (VAAI…SPAV), and 503-523 (NPGL…TLVG).

The protein belongs to the sodium:solute symporter (SSF) (TC 2.A.21) family.

It localises to the cell membrane. Acts as a secondary carrier for acetate, propionate and pyruvate. Has high affinity for acetate and propionate and lower affinity for pyruvate. Driven by the electrochemical proton potential. The sequence is that of Monocarboxylic acid transporter from Corynebacterium glutamicum (strain ATCC 13032 / DSM 20300 / JCM 1318 / BCRC 11384 / CCUG 27702 / LMG 3730 / NBRC 12168 / NCIMB 10025 / NRRL B-2784 / 534).